Here is a 289-residue protein sequence, read N- to C-terminus: 33 kDa chaperonin (289 aa).

Cystine bridges form between Cys229–Cys231 and Cys262–Cys265.

The protein belongs to the HSP33 family. Post-translationally, under oxidizing conditions two disulfide bonds are formed involving the reactive cysteines. Under reducing conditions zinc is bound to the reactive cysteines and the protein is inactive.

The protein localises to the cytoplasm. Redox regulated molecular chaperone. Protects both thermally unfolding and oxidatively damaged proteins from irreversible aggregation. Plays an important role in the bacterial defense system toward oxidative stress. The sequence is that of 33 kDa chaperonin from Pectobacterium atrosepticum (strain SCRI 1043 / ATCC BAA-672) (Erwinia carotovora subsp. atroseptica).